Consider the following 87-residue polypeptide: Putative septation protein SpoVG (87 aa).

This sequence belongs to the SpoVG family.

Functionally, could be involved in septation. In Agathobacter rectalis (strain ATCC 33656 / DSM 3377 / JCM 17463 / KCTC 5835 / VPI 0990) (Eubacterium rectale), this protein is Putative septation protein SpoVG.